A 734-amino-acid chain; its full sequence is MALRFPRFSQGLAQDPTTRRIWFGIATAHDFESHDDITEERLYQNIFASHFGQLAIIFLWTSGNLFHVAWQGNFETWVQDPLHVRPIAHAIWDPHFGQPAVEAFTRGGALGPVNIAYSGVYQWWYTIGLRTNEDLYTGALFLLFLSALSLIGGWLHLQPKWKPRVSWFKNAESRLNHHLSGLFGVSSLAWTGHLVHVAIPASRGENVRWNNFLNVLPHPQGLGPLFTGQWNLYAQNPDSSSHLFGTSQGSGTAILTLLGGFHPQTQSLWLTDMAHHHLAIAILFLIAGHMYRTNFGIGHSIKDLLEAHIPPGGRLGRGHKGLYDTINNSIHFQLGLALASLGVITSLVAQHMYSLPAYAFIAQDFTTQAALYTHHQYIAGFIMTGAFAHGAIFFIRDYNPEQNEDNVLARMLDHKEAIISHLSWASLFLGFHTLGLYVHNDVMLAFGTPEKQILIEPIFAQWIQSAHGKTSYGFDVLLSSTSGPAFNAGRSIWLPGWLNAINENSNSLFLTIGPGDFLVHHAIALGLHTTTLILVKGALDARGSKLMPDKKDFGYSFPCDGPGRGGTCDISAWDAFYLAVFWMLNTIGWVTFYWHWKHITLWQGNVSQFNESSTYLMGWLRDYLWLNSSQLINGYNPFGMNSLSVWAWMFLFGHLVWATGFMFLISWRGYWQELIETLAWAHERTPLANLIRWKDKPVALSIVQARLVGLAHFSVGYIFTYAAFLIASTSGKFG.

Transmembrane regions (helical) follow at residues 46–69 (IFAS…FHVA), 135–158 (LYTG…LHLQ), 175–199 (LNHH…HVAI), 273–291 (MAHH…GHMY), 330–353 (IHFQ…QHMY), 369–395 (AALY…IFFI), 417–439 (AIIS…LYVH), and 517–535 (FLVH…LILV). Residues cysteine 559 and cysteine 568 each contribute to the [4Fe-4S] cluster site. 2 helical membrane passes run 575-596 (AFYL…YWHW) and 643-665 (LSVW…MFLI). 3 residues coordinate chlorophyll a: histidine 654, methionine 662, and tyrosine 670. Tryptophan 671 serves as a coordination point for phylloquinone. The helical transmembrane segment at 707–727 (LVGLAHFSVGYIFTYAAFLIA) threads the bilayer.

This sequence belongs to the PsaA/PsaB family. The PsaA/B heterodimer binds the P700 chlorophyll special pair and subsequent electron acceptors. PSI consists of a core antenna complex that captures photons, and an electron transfer chain that converts photonic excitation into a charge separation. The eukaryotic PSI reaction center is composed of at least 11 subunits. Requires P700 is a chlorophyll a/chlorophyll a' dimer, A0 is one or more chlorophyll a, A1 is one or both phylloquinones and FX is a shared 4Fe-4S iron-sulfur center. as cofactor.

It is found in the plastid. Its subcellular location is the chloroplast thylakoid membrane. It catalyses the reaction reduced [plastocyanin] + hnu + oxidized [2Fe-2S]-[ferredoxin] = oxidized [plastocyanin] + reduced [2Fe-2S]-[ferredoxin]. Functionally, psaA and PsaB bind P700, the primary electron donor of photosystem I (PSI), as well as the electron acceptors A0, A1 and FX. PSI is a plastocyanin-ferredoxin oxidoreductase, converting photonic excitation into a charge separation, which transfers an electron from the donor P700 chlorophyll pair to the spectroscopically characterized acceptors A0, A1, FX, FA and FB in turn. Oxidized P700 is reduced on the lumenal side of the thylakoid membrane by plastocyanin. In Lepidium virginicum (Virginia pepperweed), this protein is Photosystem I P700 chlorophyll a apoprotein A2.